The following is a 340-amino-acid chain: uncharacterized protein (340 aa).

A run of 2 helical transmembrane segments spans residues 162 to 182 and 239 to 259; these read PLVPLVAGPLPVAFFIGVLAG and FWIALYFPLTMRSLCNAIVVP.

Its subcellular location is the cell membrane. This is an uncharacterized protein from Mycobacterium tuberculosis (strain CDC 1551 / Oshkosh).